We begin with the raw amino-acid sequence, 274 residues long: 2,3,4,5-tetrahydropyridine-2,6-dicarboxylate N-succinyltransferase (274 aa).

Substrate contacts are provided by arginine 106 and aspartate 143.

It belongs to the transferase hexapeptide repeat family. Homotrimer.

It localises to the cytoplasm. It catalyses the reaction (S)-2,3,4,5-tetrahydrodipicolinate + succinyl-CoA + H2O = (S)-2-succinylamino-6-oxoheptanedioate + CoA. It functions in the pathway amino-acid biosynthesis; L-lysine biosynthesis via DAP pathway; LL-2,6-diaminopimelate from (S)-tetrahydrodipicolinate (succinylase route): step 1/3. The protein is 2,3,4,5-tetrahydropyridine-2,6-dicarboxylate N-succinyltransferase of Acidovorax sp. (strain JS42).